The chain runs to 579 residues: Mitogen-activated protein kinase kinase kinase 7 (579 aa).

Residues 1 to 300 (MSTASAASSS…FPGADEPLQY (300 aa)) form an interaction with MAPK8IP1 region. A Protein kinase domain is found at 36–291 (IEVEEVVGRG…KIMTHLMRYF (256 aa)). ATP contacts are provided by residues 42-50 (VGRGAFGVV) and K63. K72 is covalently cross-linked (Glycyl lysine isopeptide (Lys-Gly) (interchain with G-Cter in ubiquitin)). D156 acts as the Proton acceptor in catalysis. K158 participates in a covalent cross-link: Glycyl lysine isopeptide (Lys-Gly) (interchain with G-Cter in ubiquitin). A phosphothreonine; by autocatalysis mark is found at T184 and T187. S192 carries the post-translational modification Phosphoserine; by autocatalysis. K209 is covalently cross-linked (Glycyl lysine isopeptide (Lys-Gly) (interchain with G-Cter in ubiquitin)). 2 disordered regions span residues 301–339 (PCQY…EQVP) and 354–391 (KNQA…MSAD). Residues 306-322 (DEGQSNSATSTGSFMDI) show a composition bias toward polar residues. 2 stretches are compositionally biased toward low complexity: residues 323-334 (TSTNTSNKSDTN) and 361-375 (SESG…RGSS). A phosphoserine mark is found at S367, S389, and S412. The segment covering 416–425 (LTVTGTDPGQ) has biased composition (polar residues). Residues 416 to 466 (LTVTGTDPGQVSSRSSSPSVRMITTSGPTSEKPARSHPWTPDDSTDTNGSD) form a disordered region. Residues 426–436 (VSSRSSSPSVR) show a composition bias toward low complexity. S428 is subject to Phosphoserine.

The protein belongs to the protein kinase superfamily. STE Ser/Thr protein kinase family. MAP kinase kinase kinase subfamily. As to quaternary structure, can form homodimer. Binds both upstream activators and downstream substrates in multimolecular complexes. Interacts with TAB1/MAP3K7IP1, TAB2/MAP3K7IP2 and TAB3/MAP3K7IP3. Identified in the TRIKA2 complex composed of MAP3K7/TAK1, TAB1/MAP3K7IP1 and TAB2/MAP3K7IP2. Interacts with PPM1L and PPM1B/PP2CB. Interaction with PP2A and PPP6C leads to its repressed activity. Interacts with TRAF6 and TAB1/MAP3K7IP1; during IL-1 signaling. Interacts with TAOK1 and TAOK2; interaction with TAOK2 interferes with MAP3K7 interaction with IKKA, thus preventing NF-kappa-B activation. Interacts with DYNC2I2 (via WD domains). Interacts with CYLD and RBCK1. Interacts with TGFBR1; induces MAP3K7/TAK1 activation by TRAF6. Interacts with MAPK8IP1 and SMAD6. Interacts with isoform 1 of VRK2. Interacts with DAB2; the interaction is induced by TGF-beta stimulation and may mediate TGF-beta stimulated JNK activation. Interacts with TRIM5. Part of a complex containing ITCH, NDFIP1 and MAP3K7. Interacts with IFIT5; the interaction synergizes the recruitment of IKK to MAP3K7 and enhances IKK phosphorylation. Interacts with PLEKHM1 (via N- and C-terminus). Found in a complex with SH3RF1, RAC2, MAP2K7/MKK7, MAPK8IP1/JIP1, MAPK8/JNK1 and MAPK9/JNK2. Interacts with SASH1. Interacts with RIPK1. Mg(2+) serves as cofactor. Post-translationally, association with TAB1/MAP3K7IP1 promotes autophosphorylation at Ser-192 and subsequent activation. Association with TAB2/MAP3K7IP2, itself associated with free unanchored Lys-63 polyubiquitin chain, promotes autophosphorylation and subsequent activation of MAP3K7. Dephosphorylation at Ser-192 by PPM1B/PP2CB and at Thr-187 by PP2A and PPP6C leads to inactivation. In terms of processing, 'Lys-48'-linked polyubiquitination at Lys-72 is induced by TNFalpha, and leads to proteasomal degradation. Undergoes 'Lys-48'-linked polyubiquitination catalyzed by ITCH. 'Lys-63'-linked polyubiquitination at Lys-158 by TRIM8 does not lead to proteasomal degradation but contributes to autophosphorylation and activation. Deubiquitinated by CYLD, a protease that selectively cleaves 'Lys-63'-linked ubiquitin chains. Deubiquitinated by USP19; leading to negative regulation of TNF-alpha- and IL-1beta-triggered NF-kappa-B activation.

The protein localises to the cytoplasm. It is found in the cell membrane. The enzyme catalyses L-seryl-[protein] + ATP = O-phospho-L-seryl-[protein] + ADP + H(+). The catalysed reaction is L-threonyl-[protein] + ATP = O-phospho-L-threonyl-[protein] + ADP + H(+). Its activity is regulated as follows. Activated by pro-inflammatory cytokines and in response to physical and chemical stresses, including osmotic stress, oxidative stress, arsenic and ultraviolet light irradiation. Activated by 'Lys-63'-linked polyubiquitination and by autophosphorylation. Association with TAB1/MAP3K7IP1 and TAB2/MAP3K7IP2 promotes activation through autophosphorylation, whereas PPM1B/PP2CB, PP2A and PPP6C dephosphorylation leads to inactivation. Ceramides are also able to activate MAP3K7/TAK1. In terms of biological role, serine/threonine kinase which acts as an essential component of the MAP kinase signal transduction pathway. Plays an important role in the cascades of cellular responses evoked by changes in the environment. Mediates signal transduction of TRAF6, various cytokines including interleukin-1 (IL-1), transforming growth factor-beta (TGFB), TGFB-related factors like BMP2 and BMP4, toll-like receptors (TLR), tumor necrosis factor receptor CD40 and B-cell receptor (BCR). Once activated, acts as an upstream activator of the MKK/JNK signal transduction cascade and the p38 MAPK signal transduction cascade through the phosphorylation and activation of several MAP kinase kinases like MAP2K1/MEK1, MAP2K3/MKK3, MAP2K6/MKK6 and MAP2K7/MKK7. These MAP2Ks in turn activate p38 MAPKs and c-jun N-terminal kinases (JNKs); both p38 MAPK and JNK pathways control the transcription factors activator protein-1 (AP-1). Independently of MAP2Ks and p38 MAPKs, acts as a key activator of NF-kappa-B by promoting activation of the I-kappa-B-kinase (IKK) core complex. Mechanistically, recruited to polyubiquitin chains of RIPK2 and IKBKG/NEMO via TAB2/MAP3K7IP2 and TAB3/MAP3K7IP3, and catalyzes phosphorylation and activation of IKBKB/IKKB component of the IKK complex, leading to NF-kappa-B activation. In osmotic stress signaling, plays a major role in the activation of MAPK8/JNK1, but not that of NF-kappa-B. Promotes TRIM5 capsid-specific restriction activity. Phosphorylates RIPK1 at 'Ser-321' which positively regulates RIPK1 interaction with RIPK3 to promote necroptosis but negatively regulates RIPK1 kinase activity and its interaction with FADD to mediate apoptosis. Phosphorylates STING1 in response to cGAMP-activation, promoting association between STEEP1 and STING1 and STING1 translocation to COPII vesicles. The chain is Mitogen-activated protein kinase kinase kinase 7 (MAP3K7) from Bos taurus (Bovine).